The sequence spans 208 residues: Octanoyltransferase (208 aa).

The BPL/LPL catalytic domain occupies 30–208 (GTASEAVFIL…ILKQEFYKIF (179 aa)). Residues 69 to 76 (RGGKFTYH), 142 to 144 (SIG), and 155 to 157 (GVA) contribute to the substrate site. Cys-173 serves as the catalytic Acyl-thioester intermediate.

The protein belongs to the LipB family.

The protein resides in the cytoplasm. The catalysed reaction is octanoyl-[ACP] + L-lysyl-[protein] = N(6)-octanoyl-L-lysyl-[protein] + holo-[ACP] + H(+). It participates in protein modification; protein lipoylation via endogenous pathway; protein N(6)-(lipoyl)lysine from octanoyl-[acyl-carrier-protein]: step 1/2. Its function is as follows. Catalyzes the transfer of endogenously produced octanoic acid from octanoyl-acyl-carrier-protein onto the lipoyl domains of lipoate-dependent enzymes. Lipoyl-ACP can also act as a substrate although octanoyl-ACP is likely to be the physiological substrate. The chain is Octanoyltransferase from Orientia tsutsugamushi (strain Boryong) (Rickettsia tsutsugamushi).